A 185-amino-acid polypeptide reads, in one-letter code: Ribosome-recycling factor (185 aa).

This sequence belongs to the RRF family.

The protein localises to the cytoplasm. In terms of biological role, responsible for the release of ribosomes from messenger RNA at the termination of protein biosynthesis. May increase the efficiency of translation by recycling ribosomes from one round of translation to another. The chain is Ribosome-recycling factor from Vibrio campbellii (strain ATCC BAA-1116).